The primary structure comprises 88 residues: Small ribosomal subunit protein bS16 (88 aa).

This sequence belongs to the bacterial ribosomal protein bS16 family.

This Geobacter sp. (strain M21) protein is Small ribosomal subunit protein bS16.